Here is a 59-residue protein sequence, read N- to C-terminus: Large ribosomal subunit protein bL32 (59 aa).

Residues 1 to 15 (MAVPKKKTSKSKRDM) are compositionally biased toward basic residues. Residues 1–26 (MAVPKKKTSKSKRDMRRATWNRKAAA) are disordered.

It belongs to the bacterial ribosomal protein bL32 family.

This Cyanothece sp. (strain PCC 7425 / ATCC 29141) protein is Large ribosomal subunit protein bL32.